The following is a 142-amino-acid chain: Large ribosomal subunit protein uL13 (142 aa).

This sequence belongs to the universal ribosomal protein uL13 family. As to quaternary structure, part of the 50S ribosomal subunit.

This protein is one of the early assembly proteins of the 50S ribosomal subunit, although it is not seen to bind rRNA by itself. It is important during the early stages of 50S assembly. This is Large ribosomal subunit protein uL13 from Francisella tularensis subsp. holarctica (strain FTNF002-00 / FTA).